A 531-amino-acid chain; its full sequence is Conglutin beta 1 (531 aa).

The N-terminal stretch at 1-30 (MGKMRVRFPTLVLVLGIVFLMAVSIGIAYG) is a signal peptide. The propeptide occupies 31–108 (EKDVLKSHER…EQQQGSPSYS (78 aa)). Basic and acidic residues-rich tracts occupy residues 37–51 (SHER…EWQP) and 79–99 (SGYE…REQE). Disordered stretches follow at residues 37-124 (SHER…RFQT), 283-302 (QEYE…EGVI), and 314-337 (TKYA…LRSN). Positions 115–273 (YHFNSQRFQT…TFNTRYEEIQ (159 aa)) constitute a Cupin type-1 1 domain. The span at 286-302 (EEQRRGQEQSHQDEGVI) shows a compositional bias: basic and acidic residues. Over residues 316 to 337 (YAQSSSGKDKPSQSGPFNLRSN) the composition is skewed to polar residues. The Cupin type-1 2 domain occupies 332–494 (FNLRSNEPIY…TFPGSAEDIE (163 aa)). Residue Asn-444 is glycosylated (N-linked (GlcNAc...) asparagine). The tract at residues 508 to 531 (ALPQQQQQSEKEGRRGRRGPISSI) is disordered.

It belongs to the 7S seed storage protein family.

Seed storage protein. Accumulates during seed development and is hydrolyzed after germination to provide a carbon and nitrogen source for the developing seedling. Functionally, has a lectin-like activity. This chain is Conglutin beta 1, found in Lupinus albus (White lupine).